A 298-amino-acid polypeptide reads, in one-letter code: tRNA pseudouridine synthase B (298 aa).

Residue D39 is the Nucleophile of the active site.

This sequence belongs to the pseudouridine synthase TruB family. Type 1 subfamily.

It carries out the reaction uridine(55) in tRNA = pseudouridine(55) in tRNA. Functionally, responsible for synthesis of pseudouridine from uracil-55 in the psi GC loop of transfer RNAs. The polypeptide is tRNA pseudouridine synthase B (Lactobacillus delbrueckii subsp. bulgaricus (strain ATCC BAA-365 / Lb-18)).